Here is a 549-residue protein sequence, read N- to C-terminus: Mitochondrial hydroperoxide bicyclase CYP50918A1 (549 aa).

The disordered stretch occupies residues 1–75 (MPDAFDVSDD…PQGNRKPAVL (75 aa)). The segment covering 8–26 (SDDKQLVDQQLTRDSDSKP) has biased composition (basic and acidic residues). The span at 27–41 (AAKPASKQKPPSKVP) shows a compositional bias: low complexity. Cys491 is a binding site for heme. The segment at 528–549 (DTGDHGPPNGKFSVIKPRQPKH) is disordered.

It belongs to the cytochrome P450 family. Heme is required as a cofactor.

The protein localises to the mitochondrion. The enzyme catalyses (13S)-hydroperoxy-(9Z,11E,15Z)-octadecatrienoate = plasmodiophorol A. The catalysed reaction is (13S)-hydroperoxy-(9Z,11E,15Z)-octadecatrienoate = plasmodiophorol B. The protein operates within lipid metabolism; oxylipin biosynthesis. In terms of biological role, cytochrome P450 hydroperoxide bicyclase involved in the metabolism of oxylipins natural products such as egregiachlorides, hybridalactone, ecklonialactones and related bicyclic oxylipins. Isomerizes the hydroperoxides into epoxyalcohols via epoxyallylic radical. Can use alpha-linolenic 13-hydroperoxide ((9Z,11E,13S,15Z)-13-hydroperoxy-9,11,15-octadecatrienoic, 13-HPOT) as preferred substrate to produce the heterobicyclic oxylipins plasmodiophorol A (6-oxabicyclo[3.1.0]hexane) and plasmodiophorol B (2-oxabicyclo[2.2.1]heptane) at the ratio 12:1 and a minor product plasmodiophorol C (cyclopentanediol) formed through the hydrolysis of plasmodiophorols A and B and, to a lower extent, active with linoleic acid 13-hydroperoxide ((9Z,11E,13S)-13-hydroperoxy-9,11-octadecadienoic, 13-HPOD), linoleic acid 9-hydroperoxide ((9S,10E,12Z)-9-hydroperoxy-10,12-octadecadienoic, 9-HPOD) and alpha-linolenic 9-hydroperoxide ((9S,10E,12Z,15Z)-9-hydroperoxy-10,12,15-octadecatrienoic, 9-HPOT). The sequence is that of Mitochondrial hydroperoxide bicyclase CYP50918A1 from Plasmodiophora brassicae (Clubroot disease agent).